A 334-amino-acid polypeptide reads, in one-letter code: Ornithine carbamoyltransferase (334 aa).

Residues 56–59, Gln-83, Arg-107, and 134–137 each bind carbamoyl phosphate; these read STRT and HPTQ. L-ornithine-binding positions include Asn-168, Asp-232, and 236 to 237; that span reads SM. Residues 274-275 and Arg-320 each bind carbamoyl phosphate; that span reads CL.

It belongs to the aspartate/ornithine carbamoyltransferase superfamily. OTCase family.

It is found in the cytoplasm. The enzyme catalyses carbamoyl phosphate + L-ornithine = L-citrulline + phosphate + H(+). It functions in the pathway amino-acid biosynthesis; L-arginine biosynthesis; L-arginine from L-ornithine and carbamoyl phosphate: step 1/3. In terms of biological role, reversibly catalyzes the transfer of the carbamoyl group from carbamoyl phosphate (CP) to the N(epsilon) atom of ornithine (ORN) to produce L-citrulline. The sequence is that of Ornithine carbamoyltransferase from Escherichia coli (strain 55989 / EAEC).